The following is a 265-amino-acid chain: Putative Tubby-like protein 4 (265 aa).

The F-box domain occupies 1-44 (MPPELLRDVLMRIERSEDTWPSRKNVVSCVGVCKNWRQIFKEIV). Residues 228–250 (SYELKLALYFAKNSAILKKFVLR) enclose the FBD domain.

It belongs to the TUB family.

This Arabidopsis thaliana (Mouse-ear cress) protein is Putative Tubby-like protein 4.